Consider the following 104-residue polypeptide: Photosystem II reaction center Psb28 protein (104 aa).

Belongs to the Psb28 family. In terms of assembly, part of the photosystem II complex.

It is found in the cellular thylakoid membrane. This chain is Photosystem II reaction center Psb28 protein, found in Synechococcus sp. (strain JA-2-3B'a(2-13)) (Cyanobacteria bacterium Yellowstone B-Prime).